Consider the following 532-residue polypeptide: Neutral amino acid transporter A (532 aa).

Methionine 1 carries the N-acetylmethionine modification. A disordered region spans residues methionine 1–methionine 29. Over methionine 1–arginine 41 the chain is Cytoplasmic. Helical transmembrane passes span histidine 42–leucine 62, methionine 88–serine 108, and alanine 119–isoleucine 139. Over lysine 140 to threonine 216 the chain is Extracellular. Residues asparagine 201 and asparagine 206 are each glycosylated (N-linked (GlcNAc...) asparagine). 6 consecutive transmembrane segments (helical) span residues aspartate 217–leucine 237, alanine 257–isoleucine 277, isoleucine 298–phenylalanine 318, phenylalanine 328–threonine 348, isoleucine 373–isoleucine 393, and valine 418–isoleucine 438. The segment at glutamate 495–leucine 532 is disordered. Phosphoserine occurs at positions 507, 527, and 530.

The protein belongs to the dicarboxylate/amino acid:cation symporter (DAACS) (TC 2.A.23) family. SLC1A4 subfamily.

It localises to the membrane. Its subcellular location is the melanosome. It carries out the reaction L-threonine(in) + Na(+)(in) = L-threonine(out) + Na(+)(out). The enzyme catalyses L-serine(in) + Na(+)(in) = L-serine(out) + Na(+)(out). It catalyses the reaction L-cysteine(in) + Na(+)(in) = L-cysteine(out) + Na(+)(out). The catalysed reaction is L-alanine(in) + Na(+)(in) = L-alanine(out) + Na(+)(out). It carries out the reaction L-proline(in) + Na(+)(in) = L-proline(out) + Na(+)(out). The enzyme catalyses 4-hydroxy-L-proline(in) + Na(+)(in) = 4-hydroxy-L-proline(out) + Na(+)(out). Functionally, sodium-dependent neutral amino-acid transporter that mediates transport of alanine, serine, cysteine, proline, hydroxyproline and threonine. The sequence is that of Neutral amino acid transporter A (Slc1a4) from Mus musculus (Mouse).